The primary structure comprises 72 residues: Late effector protein 1 (72 aa).

Residues 1–22 (MKCYLVVVVAALCTLVAQGSVG) form the signal peptide. N-linked (GlcNAc...) asparagine glycosylation is present at asparagine 66.

Belongs to the lep1 family. In terms of assembly, interacts at the cell wall with secreted rep1 repellent peptides.

The protein localises to the secreted. It localises to the cell wall. Functionally, core effector contributing to spore formation and tumor formation at the host plant. Modulates surface hydrophobicity promoting cell-cell or cell-surface contacts. Lep1 and rep1 interact in aerial hyphae to form a strong hydrophobic layer. Plays a crucial role in hyphal aggregation that might be a prerequisite for strong proliferation of diploid cells and for induction of the morphological changes associated with spore formation. In Sporisorium reilianum (strain SRZ2) (Maize head smut fungus), this protein is Late effector protein 1.